Here is a 323-residue protein sequence, read N- to C-terminus: tRNA dimethylallyltransferase (323 aa).

12 to 19 is an ATP binding site; that stretch reads GPTAAGKT. 14–19 serves as a coordination point for substrate; that stretch reads TAAGKT. Interaction with substrate tRNA regions lie at residues 37 to 40 and 161 to 165; these read DSAL and QRLSR.

It belongs to the IPP transferase family. In terms of assembly, monomer. Requires Mg(2+) as cofactor.

The catalysed reaction is adenosine(37) in tRNA + dimethylallyl diphosphate = N(6)-dimethylallyladenosine(37) in tRNA + diphosphate. Catalyzes the transfer of a dimethylallyl group onto the adenine at position 37 in tRNAs that read codons beginning with uridine, leading to the formation of N6-(dimethylallyl)adenosine (i(6)A). The sequence is that of tRNA dimethylallyltransferase from Pseudomonas fluorescens (strain Pf0-1).